A 288-amino-acid chain; its full sequence is Chemotaxis protein methyltransferase 2 (288 aa).

The region spanning methionine 1–lysine 280 is the CheR-type methyltransferase domain. Residues asparagine 76, threonine 78, arginine 82, glutamate 119, aspartate 145, asparagine 200 to leucine 201, and arginine 219 to asparagine 220 contribute to the S-adenosyl-L-methionine site.

The enzyme catalyses L-glutamyl-[protein] + S-adenosyl-L-methionine = [protein]-L-glutamate 5-O-methyl ester + S-adenosyl-L-homocysteine. Functionally, methylation of the membrane-bound methyl-accepting chemotaxis proteins (MCP) to form gamma-glutamyl methyl ester residues in MCP. The chain is Chemotaxis protein methyltransferase 2 (cheR2) from Vibrio cholerae serotype O1 (strain ATCC 39315 / El Tor Inaba N16961).